The sequence spans 506 residues: Histidine ammonia-lyase (506 aa).

The 5-imidazolinone (Ala-Gly) cross-link spans 142-144; it reads ASG. Ser143 bears the 2,3-didehydroalanine (Ser) mark.

The protein belongs to the PAL/histidase family. Contains an active site 4-methylidene-imidazol-5-one (MIO), which is formed autocatalytically by cyclization and dehydration of residues Ala-Ser-Gly.

Its subcellular location is the cytoplasm. The enzyme catalyses L-histidine = trans-urocanate + NH4(+). It participates in amino-acid degradation; L-histidine degradation into L-glutamate; N-formimidoyl-L-glutamate from L-histidine: step 1/3. This Bacillus cereus (strain B4264) protein is Histidine ammonia-lyase.